The primary structure comprises 377 residues: UPF0754 membrane protein GTNG_0550 (377 aa).

A run of 2 helical transmembrane segments spans residues 7-27 (LLFMMAVGALIGGMTNFIAIV) and 357-377 (YLGALLGAMIGAVQGIIGLWL).

The protein belongs to the UPF0754 family.

It is found in the cell membrane. This is UPF0754 membrane protein GTNG_0550 from Geobacillus thermodenitrificans (strain NG80-2).